The chain runs to 265 residues: Flagellar brake protein YcgR (265 aa).

A PilZ domain is found at glutamine 135 to arginine 252.

This sequence belongs to the YcgR family. In terms of assembly, monomer. Interacts with the flagellar basal bodies.

It is found in the bacterial flagellum basal body. Acts as a flagellar brake, regulating swimming and swarming in a bis-(3'-5') cyclic diguanylic acid (c-di-GMP)-dependent manner. Binds 1 c-di-GMP dimer per subunit. Increasing levels of c-di-GMP lead to decreased motility. The sequence is that of Flagellar brake protein YcgR from Xanthomonas campestris pv. campestris (strain B100).